The primary structure comprises 252 residues: Imidazole glycerol phosphate synthase subunit HisF (252 aa).

Catalysis depends on residues aspartate 11 and aspartate 130.

It belongs to the HisA/HisF family. As to quaternary structure, heterodimer of HisH and HisF.

The protein resides in the cytoplasm. It catalyses the reaction 5-[(5-phospho-1-deoxy-D-ribulos-1-ylimino)methylamino]-1-(5-phospho-beta-D-ribosyl)imidazole-4-carboxamide + L-glutamine = D-erythro-1-(imidazol-4-yl)glycerol 3-phosphate + 5-amino-1-(5-phospho-beta-D-ribosyl)imidazole-4-carboxamide + L-glutamate + H(+). It functions in the pathway amino-acid biosynthesis; L-histidine biosynthesis; L-histidine from 5-phospho-alpha-D-ribose 1-diphosphate: step 5/9. Its function is as follows. IGPS catalyzes the conversion of PRFAR and glutamine to IGP, AICAR and glutamate. The HisF subunit catalyzes the cyclization activity that produces IGP and AICAR from PRFAR using the ammonia provided by the HisH subunit. This is Imidazole glycerol phosphate synthase subunit HisF from Staphylococcus epidermidis (strain ATCC 12228 / FDA PCI 1200).